Here is a 628-residue protein sequence, read N- to C-terminus: tRNA uridine 5-carboxymethylaminomethyl modification enzyme MnmG 1 (628 aa).

An FAD-binding site is contributed by 11–16 (GAGHAG). An NAD(+)-binding site is contributed by 280-294 (GPRHCPSIDRKVLNF).

It belongs to the MnmG family. As to quaternary structure, homodimer. Heterotetramer of two MnmE and two MnmG subunits. Requires FAD as cofactor.

It localises to the cytoplasm. NAD-binding protein involved in the addition of a carboxymethylaminomethyl (cmnm) group at the wobble position (U34) of certain tRNAs, forming tRNA-cmnm(5)s(2)U34. The chain is tRNA uridine 5-carboxymethylaminomethyl modification enzyme MnmG 1 from Fusobacterium nucleatum subsp. nucleatum (strain ATCC 25586 / DSM 15643 / BCRC 10681 / CIP 101130 / JCM 8532 / KCTC 2640 / LMG 13131 / VPI 4355).